Here is a 65-residue protein sequence, read N- to C-terminus: Large ribosomal subunit protein bL35 (65 aa).

A compositionally biased stretch (basic residues) spans 1-15 (MPKLKTRKAAAKRFR). A disordered region spans residues 1-28 (MPKLKTRKAAAKRFRQTGTGKFTRRKAN).

This sequence belongs to the bacterial ribosomal protein bL35 family.

This is Large ribosomal subunit protein bL35 from Cyanothece sp. (strain PCC 7425 / ATCC 29141).